Consider the following 129-residue polypeptide: Iron-sulfur cluster assembly 1 homolog, mitochondrial (129 aa).

The transit peptide at 1–12 directs the protein to the mitochondrion; it reads MASSVVRATVRA. Fe cation is bound by residues Cys57, Cys121, and Cys123.

Belongs to the HesB/IscA family.

It is found in the mitochondrion. In terms of biological role, involved in the maturation of mitochondrial 4Fe-4S proteins functioning late in the iron-sulfur cluster assembly pathway. Probably involved in the binding of an intermediate of Fe/S cluster assembly. In Gallus gallus (Chicken), this protein is Iron-sulfur cluster assembly 1 homolog, mitochondrial (ISCA1).